The primary structure comprises 287 residues: MKMILLLRKTKNISSFNFINNFKKTKGFKKIGHCGTLDPLATGLLIVATDEDTKLIDYLDQKDKTYVARAKLGFETTTYDSEGEIINQSSNVKFTKEKLIEVLNSFIGLTKQMPPKYSAKKLNGIRAYDLARQNIDFELNEVEINITKIKLLSYNEDENYFDFEVVVSRGTYIRSLIYDIGIKLNSLAYMESLERTKIGNLFLEKNQDDKILNAKEIIQLEIIQLEKNQIENLSKGLLIDLKNEDNFYALFWKDEMIGFGQILNNVLKSKKLIGKKIQKILGDKQSE.

The active-site Nucleophile is D38.

The protein belongs to the pseudouridine synthase TruB family. Type 1 subfamily.

The enzyme catalyses uridine(55) in tRNA = pseudouridine(55) in tRNA. Responsible for synthesis of pseudouridine from uracil-55 in the psi GC loop of transfer RNAs. This is tRNA pseudouridine synthase B from Mycoplasma mobile (strain ATCC 43663 / 163K / NCTC 11711) (Mesomycoplasma mobile).